Reading from the N-terminus, the 454-residue chain is Bifunctional protein GlmU (454 aa).

A pyrophosphorylase region spans residues 1-226; the sequence is MTTTVIILAA…AFEVEGVNDR (226 aa). UDP-N-acetyl-alpha-D-glucosamine contacts are provided by residues 8–11, lysine 22, glutamine 73, 78–79, 100–102, glycine 137, glutamate 151, asparagine 166, and asparagine 224; these read LAAG, GT, and YGD. Aspartate 102 provides a ligand contact to Mg(2+). Asparagine 224 provides a ligand contact to Mg(2+). The tract at residues 227–247 is linker; sequence LQLAALEREFQLQQAKSLMQQ. The segment at 248–454 is N-acetyltransferase; it reads GVTLTDPSRF…NYQRPQKLKK (207 aa). UDP-N-acetyl-alpha-D-glucosamine contacts are provided by arginine 330 and lysine 348. Histidine 360 functions as the Proton acceptor in the catalytic mechanism. UDP-N-acetyl-alpha-D-glucosamine-binding residues include tyrosine 363 and asparagine 374. Residues alanine 377, 383-384, serine 402, alanine 420, and arginine 437 each bind acetyl-CoA; that span reads NY.

The protein in the N-terminal section; belongs to the N-acetylglucosamine-1-phosphate uridyltransferase family. In the C-terminal section; belongs to the transferase hexapeptide repeat family. Homotrimer. The cofactor is Mg(2+).

Its subcellular location is the cytoplasm. It catalyses the reaction alpha-D-glucosamine 1-phosphate + acetyl-CoA = N-acetyl-alpha-D-glucosamine 1-phosphate + CoA + H(+). It carries out the reaction N-acetyl-alpha-D-glucosamine 1-phosphate + UTP + H(+) = UDP-N-acetyl-alpha-D-glucosamine + diphosphate. It participates in nucleotide-sugar biosynthesis; UDP-N-acetyl-alpha-D-glucosamine biosynthesis; N-acetyl-alpha-D-glucosamine 1-phosphate from alpha-D-glucosamine 6-phosphate (route II): step 2/2. The protein operates within nucleotide-sugar biosynthesis; UDP-N-acetyl-alpha-D-glucosamine biosynthesis; UDP-N-acetyl-alpha-D-glucosamine from N-acetyl-alpha-D-glucosamine 1-phosphate: step 1/1. Its pathway is bacterial outer membrane biogenesis; LPS lipid A biosynthesis. In terms of biological role, catalyzes the last two sequential reactions in the de novo biosynthetic pathway for UDP-N-acetylglucosamine (UDP-GlcNAc). The C-terminal domain catalyzes the transfer of acetyl group from acetyl coenzyme A to glucosamine-1-phosphate (GlcN-1-P) to produce N-acetylglucosamine-1-phosphate (GlcNAc-1-P), which is converted into UDP-GlcNAc by the transfer of uridine 5-monophosphate (from uridine 5-triphosphate), a reaction catalyzed by the N-terminal domain. This chain is Bifunctional protein GlmU, found in Acinetobacter baylyi (strain ATCC 33305 / BD413 / ADP1).